The primary structure comprises 192 residues: PTS-dependent dihydroxyacetone kinase, ADP-binding subunit DhaL (192 aa).

Residues 5–189 (DTTIEWLGKF…SAYLFETLLE (185 aa)) enclose the DhaL domain. Mg(2+) is bound by residues Asp-29, Asp-34, and Asp-36. Residues 37-40 (HGAN), 78-79 (AS), Gly-115, Met-124, Arg-161, and 174-176 (DPG) contribute to the ADP site.

In terms of assembly, homodimer. The dihydroxyacetone kinase complex is composed of a homodimer of DhaM, a homodimer of DhaK and the subunit DhaL. It depends on Mg(2+) as a cofactor.

It is found in the cytoplasm. It catalyses the reaction dihydroxyacetone + phosphoenolpyruvate = dihydroxyacetone phosphate + pyruvate. Its pathway is polyol metabolism; glycerol degradation. Functionally, ADP-binding subunit of the dihydroxyacetone kinase, which is responsible for the phosphoenolpyruvate (PEP)-dependent phosphorylation of dihydroxyacetone. DhaL-ADP is converted to DhaL-ATP via a phosphoryl group transfer from DhaM and transmits it to dihydroxyacetone binds to DhaK. In Lactococcus lactis subsp. lactis (strain IL1403) (Streptococcus lactis), this protein is PTS-dependent dihydroxyacetone kinase, ADP-binding subunit DhaL.